We begin with the raw amino-acid sequence, 456 residues long: Probable mannan endo-1,4-beta-mannosidase F (456 aa).

The signal sequence occupies residues 1-18 (MRPLSSAALLSAIGAVAA). Residues 19–54 (QVGPWGQCGGQSYTGGTSCVSGWACVFLNDWYSQCQ) form the CBM1 domain. Residues 79–110 (STSVSATAPPSSTSSSTASVSSSTSSTPIPTS) are disordered. A ser-rich linker region spans residues 79 to 113 (STSVSATAPPSSTSSSTASVSSSTSSTPIPTSSGS). The tract at residues 114–456 (FVKAEGLKFN…CAVIDHVSRI (343 aa)) is catalytic. The substrate site is built by tryptophan 166 and asparagine 280. The active-site Proton donor is glutamate 281. Tyrosine 356 serves as a coordination point for substrate. Glutamate 390 functions as the Nucleophile in the catalytic mechanism. Tryptophan 420 contributes to the substrate binding site.

This sequence belongs to the glycosyl hydrolase 5 (cellulase A) family.

It localises to the secreted. It catalyses the reaction Random hydrolysis of (1-&gt;4)-beta-D-mannosidic linkages in mannans, galactomannans and glucomannans.. Its function is as follows. Endo-1,4-mannanase, a crucial enzyme for depolymerization of seed galactomannans and wood galactoglucomannans. The chain is Probable mannan endo-1,4-beta-mannosidase F (manF) from Neosartorya fischeri (strain ATCC 1020 / DSM 3700 / CBS 544.65 / FGSC A1164 / JCM 1740 / NRRL 181 / WB 181) (Aspergillus fischerianus).